Here is an 87-residue protein sequence, read N- to C-terminus: UPF0250 protein NT01EI_2946 (87 aa).

Belongs to the UPF0250 family.

This chain is UPF0250 protein NT01EI_2946, found in Edwardsiella ictaluri (strain 93-146).